The chain runs to 414 residues: Protein FAM81B (414 aa).

Residues 1-13 are compositionally biased toward polar residues; it reads MTSETDINKSASP. The interval 1–43 is disordered; the sequence is MTSETDINKSASPTAAAKEQPEEPDGPLPGSASEQEKKVRFSP. Coiled coils occupy residues 70–94, 121–149, 188–223, and 266–414; these read NTQR…LEQA, LLEN…QIKA, KLSG…NLDT, and LNLY…LQES.

This sequence belongs to the FAM81 family.

The polypeptide is Protein FAM81B (FAM81B) (Bos taurus (Bovine)).